Reading from the N-terminus, the 359-residue chain is RNA 3'-terminal phosphate cyclase (359 aa).

Residues Gln100 and 291–294 (HASD) each bind ATP. The Tele-AMP-histidine intermediate role is filled by His317.

It belongs to the RNA 3'-terminal cyclase family. Type 1 subfamily.

The protein resides in the cytoplasm. It catalyses the reaction a 3'-end 3'-phospho-ribonucleotide-RNA + ATP = a 3'-end 2',3'-cyclophospho-ribonucleotide-RNA + AMP + diphosphate. Functionally, catalyzes the conversion of 3'-phosphate to a 2',3'-cyclic phosphodiester at the end of RNA. The mechanism of action of the enzyme occurs in 3 steps: (A) adenylation of the enzyme by ATP; (B) transfer of adenylate to an RNA-N3'P to produce RNA-N3'PP5'A; (C) and attack of the adjacent 2'-hydroxyl on the 3'-phosphorus in the diester linkage to produce the cyclic end product. The biological role of this enzyme is unknown but it is likely to function in some aspects of cellular RNA processing. This Hyperthermus butylicus (strain DSM 5456 / JCM 9403 / PLM1-5) protein is RNA 3'-terminal phosphate cyclase.